The primary structure comprises 228 residues: Cytidylate kinase (228 aa).

12–20 (GPASAGKST) lines the ATP pocket.

It belongs to the cytidylate kinase family. Type 1 subfamily.

The protein resides in the cytoplasm. It catalyses the reaction CMP + ATP = CDP + ADP. The catalysed reaction is dCMP + ATP = dCDP + ADP. The chain is Cytidylate kinase from Lactiplantibacillus plantarum (strain ATCC BAA-793 / NCIMB 8826 / WCFS1) (Lactobacillus plantarum).